A 286-amino-acid polypeptide reads, in one-letter code: Ribosome maturation factor RimP (286 aa).

Residues Leu200–Leu224 show a composition bias toward acidic residues. The tract at residues Leu200–His286 is disordered. The span at Val248–Lys267 shows a compositional bias: basic residues. A compositionally biased stretch (polar residues) spans Ala273–His286.

This sequence belongs to the RimP family.

The protein resides in the cytoplasm. In terms of biological role, required for maturation of 30S ribosomal subunits. This Xanthobacter autotrophicus (strain ATCC BAA-1158 / Py2) protein is Ribosome maturation factor RimP.